We begin with the raw amino-acid sequence, 97 residues long: Large ribosomal subunit protein bL27 (97 aa).

Positions His-14–Ala-36 are disordered.

This sequence belongs to the bacterial ribosomal protein bL27 family.

The sequence is that of Large ribosomal subunit protein bL27 from Streptococcus sanguinis (strain SK36).